Here is a 257-residue protein sequence, read N- to C-terminus: 5-keto-4-deoxy-D-glucarate aldolase (257 aa).

The active-site Proton acceptor is histidine 51. Glutamine 152 contacts substrate. Mg(2+) is bound at residue glutamate 154. 2 residues coordinate substrate: serine 179 and aspartate 180. Residue aspartate 180 coordinates Mg(2+).

The protein belongs to the HpcH/HpaI aldolase family. KDGluc aldolase subfamily. Homohexamer; trimer of dimers. Mg(2+) is required as a cofactor.

The enzyme catalyses 5-dehydro-4-deoxy-D-glucarate = 2-hydroxy-3-oxopropanoate + pyruvate. The catalysed reaction is 2-dehydro-3-deoxy-D-glucarate = 2-hydroxy-3-oxopropanoate + pyruvate. It participates in carbohydrate acid metabolism; galactarate degradation; D-glycerate from galactarate: step 2/3. In terms of biological role, catalyzes the reversible retro-aldol cleavage of both 5-keto-4-deoxy-D-glucarate and 2-keto-3-deoxy-D-glucarate to pyruvate and tartronic semialdehyde. This Citrobacter koseri (strain ATCC BAA-895 / CDC 4225-83 / SGSC4696) protein is 5-keto-4-deoxy-D-glucarate aldolase.